The chain runs to 370 residues: tRNA-specific 2-thiouridylase MnmA (370 aa).

ATP contacts are provided by residues 24–31 and Leu-50; that span reads AMSGGVDS. Cys-118 acts as the Nucleophile in catalysis. Residues Cys-118 and Cys-214 are joined by a disulfide bond. Residue Gly-142 participates in ATP binding. The interaction with tRNA stretch occupies residues 164-166; the sequence is KDQ. Catalysis depends on Cys-214, which acts as the Cysteine persulfide intermediate.

This sequence belongs to the MnmA/TRMU family.

It is found in the cytoplasm. The catalysed reaction is S-sulfanyl-L-cysteinyl-[protein] + uridine(34) in tRNA + AH2 + ATP = 2-thiouridine(34) in tRNA + L-cysteinyl-[protein] + A + AMP + diphosphate + H(+). Its function is as follows. Catalyzes the 2-thiolation of uridine at the wobble position (U34) of tRNA, leading to the formation of s(2)U34. This chain is tRNA-specific 2-thiouridylase MnmA, found in Ehrlichia ruminantium (strain Gardel).